The sequence spans 331 residues: Phosphoribosylformylglycinamidine cyclo-ligase (331 aa).

The protein belongs to the AIR synthase family.

The protein localises to the cytoplasm. It catalyses the reaction 2-formamido-N(1)-(5-O-phospho-beta-D-ribosyl)acetamidine + ATP = 5-amino-1-(5-phospho-beta-D-ribosyl)imidazole + ADP + phosphate + H(+). Its pathway is purine metabolism; IMP biosynthesis via de novo pathway; 5-amino-1-(5-phospho-D-ribosyl)imidazole from N(2)-formyl-N(1)-(5-phospho-D-ribosyl)glycinamide: step 2/2. The sequence is that of Phosphoribosylformylglycinamidine cyclo-ligase from Clostridium tetani (strain Massachusetts / E88).